The sequence spans 194 residues: Large ribosomal subunit protein bL9 (194 aa).

Positions 156–167 are enriched in basic and acidic residues; that stretch reads RGEDISSRREDQ. Positions 156 to 194 are disordered; sequence RGEDISSRREDQDAAAEAIAAAGEFFDPDAQQDEEPEQQ. The span at 181-194 shows a compositional bias: acidic residues; sequence FDPDAQQDEEPEQQ.

This sequence belongs to the bacterial ribosomal protein bL9 family.

In terms of biological role, binds to the 23S rRNA. The protein is Large ribosomal subunit protein bL9 of Rhodopseudomonas palustris (strain BisB5).